Here is a 153-residue protein sequence, read N- to C-terminus: uncharacterized protein (153 aa).

The next 3 helical transmembrane spans lie at 17–37 (ITLIGYWIASILAIIIYSMFF), 44–64 (FLLCLLLPTPIIWFNILIGMG), and 118–138 (FVFIVGLVLIVGFTIITTLII).

To M.jannaschii MJ0129 and MJ0554.

It localises to the cell membrane. This is an uncharacterized protein from Methanocaldococcus jannaschii (strain ATCC 43067 / DSM 2661 / JAL-1 / JCM 10045 / NBRC 100440) (Methanococcus jannaschii).